The sequence spans 593 residues: DEAD-box ATP-dependent RNA helicase 18 (593 aa).

Positions 16–44 match the Q motif motif; sequence FSDLEPPLSGDIIEALNQSDFEFCTPVQA. The region spanning 47–226 is the Helicase ATP-binding domain; that stretch reads IPLLCSYKDV…KAGLRNPVRV (180 aa). 60-67 contacts ATP; that stretch reads AATGSGKT. The short motif at 174–177 is the DEAD box element; the sequence is DEAD. The Helicase C-terminal domain maps to 264 to 411; that stretch reads QLVDLLIKNS…ERKCSEDASD (148 aa). The span at 506–524 shows a compositional bias: basic and acidic residues; sequence QRQQNLQVRKEKRQEEKKE. The interval 506 to 561 is disordered; the sequence is QRQQNLQVRKEKRQEEKKEKGKRKRVDASASNDPKKASRKLTGKQRQTIQTAEDEE.

It belongs to the DEAD box helicase family. DDX55/SPB4 subfamily.

The catalysed reaction is ATP + H2O = ADP + phosphate + H(+). In Arabidopsis thaliana (Mouse-ear cress), this protein is DEAD-box ATP-dependent RNA helicase 18 (RH18).